Reading from the N-terminus, the 158-residue chain is MPHSTLLLCVIGLLAFSSACYIQNCPRGGKRALQDTGIRQCMTCGPGDQGHCFGPSICCGEGLGCWMGSPETARCFEENYLPTPCQTGGRPCGSDAGRCAAPGVCCDSESCVLDPDCLSESRYHSPADHSAGATSDSPGELLLRLLHFATRGQSEYKQ.

Residues 1–19 form the signal peptide; it reads MPHSTLLLCVIGLLAFSSA. An intrachain disulfide couples Cys20 to Cys25. Gly28 is modified (glycine amide). Intrachain disulfides connect Cys41/Cys85, Cys44/Cys58, Cys52/Cys75, Cys59/Cys65, Cys92/Cys105, Cys99/Cys117, and Cys106/Cys111.

This sequence belongs to the vasopressin/oxytocin family. Seven disulfide bonds are present in neurophysin.

The protein resides in the secreted. Vasotocin is an antidiuretic hormone. The protein is Vasotocin-neurophysin VT 2 of Oncorhynchus keta (Chum salmon).